Reading from the N-terminus, the 242-residue chain is Invasion chromosome antigen R (242 aa).

Its subcellular location is the secreted. In terms of biological role, may contribute to pathogenesis, although some of its characteristics suggest it is a fossil gene. This chain is Invasion chromosome antigen R, found in Shigella flexneri serotype 5a (strain M90T).